The following is a 267-amino-acid chain: S-adenosylmethionine decarboxylase proenzyme (267 aa).

Serine 114 acts as the Schiff-base intermediate with substrate; via pyruvic acid in catalysis. A Pyruvic acid (Ser); by autocatalysis modification is found at serine 114. Histidine 119 (proton acceptor; for processing activity) is an active-site residue. Cysteine 142 (proton donor; for catalytic activity) is an active-site residue.

The protein belongs to the prokaryotic AdoMetDC family. Type 2 subfamily. Heterooctamer of four alpha and four beta chains arranged as a tetramer of alpha/beta heterodimers. Pyruvate serves as cofactor. In terms of processing, is synthesized initially as an inactive proenzyme. Formation of the active enzyme involves a self-maturation process in which the active site pyruvoyl group is generated from an internal serine residue via an autocatalytic post-translational modification. Two non-identical subunits are generated from the proenzyme in this reaction, and the pyruvate is formed at the N-terminus of the alpha chain, which is derived from the carboxyl end of the proenzyme. The post-translation cleavage follows an unusual pathway, termed non-hydrolytic serinolysis, in which the side chain hydroxyl group of the serine supplies its oxygen atom to form the C-terminus of the beta chain, while the remainder of the serine residue undergoes an oxidative deamination to produce ammonia and the pyruvoyl group blocking the N-terminus of the alpha chain.

The enzyme catalyses S-adenosyl-L-methionine + H(+) = S-adenosyl 3-(methylsulfanyl)propylamine + CO2. It participates in amine and polyamine biosynthesis; S-adenosylmethioninamine biosynthesis; S-adenosylmethioninamine from S-adenosyl-L-methionine: step 1/1. In terms of biological role, catalyzes the decarboxylation of S-adenosylmethionine to S-adenosylmethioninamine (dcAdoMet), the propylamine donor required for the synthesis of the polyamines spermine and spermidine from the diamine putrescine. The sequence is that of S-adenosylmethionine decarboxylase proenzyme from Erwinia tasmaniensis (strain DSM 17950 / CFBP 7177 / CIP 109463 / NCPPB 4357 / Et1/99).